A 223-amino-acid polypeptide reads, in one-letter code: DNA mismatch repair protein MutH (223 aa).

It belongs to the MutH family.

The protein localises to the cytoplasm. Sequence-specific endonuclease that cleaves unmethylated GATC sequences. It is involved in DNA mismatch repair. This Shewanella sp. (strain W3-18-1) protein is DNA mismatch repair protein MutH.